Consider the following 946-residue polypeptide: Nonribosomal peptide synthetase pngA (946 aa).

Residues 32–450 (AIASREPTRY…AGREKDSIIV (419 aa)) form an adenylation (A) domain region. The 80-residue stretch at 580–659 (QPRSGLEQSL…TLSDALKQHA (80 aa)) folds into the Carrier domain. Ser618 is modified (O-(pantetheine 4'-phosphoryl)serine). Residues 681 to 933 (PIWLVHPVGG…ILDAENIFSF (253 aa)) are thioesterase (TE) domain.

The protein belongs to the NRP synthetase family.

It catalyses the reaction 2 3-phenylpyruvate + H(+) = phenguignardate + H2O. Its function is as follows. Nonribosomal peptide synthetase that mediates the biosynthesis of phenguignardic acid. PngA alone is sufficient for phenguignardic acid synthesis. PngA first activates phenylpyruvic acid (PPA) through its A domain to AMP-PPA. The PPA unit is then loaded to the T domain and eventually transferred to the TE domain. Another PPA unit is then loaded onto the T domain. The TE domain likely promotes the enolate formation on the attached unit, followed by a nucleophilic attack on the carbonyl to yield an ether linkage between the two units. Finally, the TE domain probably catalyzes a similar reaction to give the cyclized dioxolanone core and releases phenguignardic acid. In Aspergillus terreus (strain NIH 2624 / FGSC A1156), this protein is Nonribosomal peptide synthetase pngA.